Here is a 429-residue protein sequence, read N- to C-terminus: Serum response factor-binding protein 1 (429 aa).

At alanine 2 the chain carries N-acetylalanine. Coiled-coil stretches lie at residues 42–67 (KGTE…AMKE) and 108–144 (LLKK…EDNH). Composition is skewed to polar residues over residues 128–138 (QNVTEVESSKN) and 146–160 (KNTL…NLQR). Disordered regions lie at residues 128-285 (QNVT…GDDF) and 311-429 (EKVF…TFDD). Residues 183–195 (NSKEKIAKMEHGP) show a composition bias toward basic and acidic residues. Lysine 190 is covalently cross-linked (Glycyl lysine isopeptide (Lys-Gly) (interchain with G-Cter in SUMO2)). A phosphoserine mark is found at serine 203, serine 205, serine 264, serine 279, and serine 281. Residues 249–265 (GGEELCEEEKEYFDDST) show a composition bias toward acidic residues. Over residues 311–341 (EKVFLKEDTGETHGDTRNDKTKPSTETRKLE) the composition is skewed to basic and acidic residues. A Glycyl lysine isopeptide (Lys-Gly) (interchain with G-Cter in SUMO2) cross-link involves residue lysine 316. Serine 349, serine 351, and serine 367 each carry phosphoserine. The segment covering 357 to 367 (NFKEQAPKTRS) has biased composition (basic and acidic residues). Residues 373 to 383 (NEPQFKNQFNK) show a composition bias toward polar residues.

Interacts with SRF. Forms complexes with SRF and SRF cofactors ARID2, MYOCD and NKX2-5. Interacts with the N-terminus of SLC2A4.

It localises to the cytoplasm. The protein resides in the perinuclear region. May be involved in regulating transcriptional activation of cardiac genes during the aging process. May play a role in biosynthesis and/or processing of SLC2A4 in adipose cells. The sequence is that of Serum response factor-binding protein 1 from Pongo abelii (Sumatran orangutan).